The primary structure comprises 245 residues: MATRTQFENSNEIGVFSKLTNTYCLVAVGGSENFYSAFEAELGDAIPIVHTTIAGTRIIGRMTAGNRRGLLVPTQTTDQELQHLRNSLPDSVKIQRVEERLSALGNVICCNDYVALVHPDIDRETEELISDVLGVEVFRQTISGNILVGSYCSLSNQGGLVHPQTSVQDQEELSSLLQVPLVAGTVNRGSSVVGAGMVVNDYLAVTGLDTTAPELSVIESIFRLQDAQPESISGNLRDTLIETYS.

S174 and S175 each carry phosphoserine; by CK1. S231 is modified (phosphoserine).

Belongs to the eIF-6 family. Monomer. Associates with the 60S ribosomal subunit. In terms of processing, phosphorylation at Ser-174 and Ser-175 promotes nuclear export.

It localises to the cytoplasm. It is found in the nucleus. The protein resides in the nucleolus. Its function is as follows. Binds to the 60S ribosomal subunit and prevents its association with the 40S ribosomal subunit to form the 80S initiation complex in the cytoplasm. Is also involved in ribosome biogenesis. Associates with pre-60S subunits in the nucleus and is involved in its nuclear export. Cytoplasmic release of TIF6 from 60S subunits and nuclear relocalization is promoted by the GTPase RIA1/EFL1 and by SDO1. Also required for pre-rRNA processing. This chain is Eukaryotic translation initiation factor 6, found in Saccharomyces cerevisiae (strain ATCC 204508 / S288c) (Baker's yeast).